The following is a 221-amino-acid chain: Iron-sulfur cluster repair protein YtfE (221 aa).

This sequence belongs to the RIC family. YtfE subfamily. In terms of assembly, homodimer.

It is found in the cytoplasm. Di-iron-containing protein involved in the repair of iron-sulfur clusters damaged by oxidative and nitrosative stress conditions. The protein is Iron-sulfur cluster repair protein YtfE of Pectobacterium carotovorum subsp. carotovorum (strain PC1).